Here is a 423-residue protein sequence, read N- to C-terminus: Glutamyl-tRNA(Gln) amidotransferase subunit A (423 aa).

The interval 1–20 is disordered; it reads MSHNAFITEETIEPTDDGPL. The segment covering 10-19 has biased composition (acidic residues); sequence ETIEPTDDGP. Active-site charge relay system residues include K28 and S103. The segment at 75 to 108 is disordered; the sequence is EFGMGTTTETSAFGPTENPAAEGRVPGGSSGGSA. Catalysis depends on S127, which acts as the Acyl-ester intermediate. Residues 183-206 form a disordered region; it reads DERDGTTREPPAGQPTYADAADGD.

It belongs to the amidase family. GatA subfamily. In terms of assembly, heterotrimer of A, B and C subunits.

The enzyme catalyses L-glutamyl-tRNA(Gln) + L-glutamine + ATP + H2O = L-glutaminyl-tRNA(Gln) + L-glutamate + ADP + phosphate + H(+). Functionally, allows the formation of correctly charged Gln-tRNA(Gln) through the transamidation of misacylated Glu-tRNA(Gln) in organisms which lack glutaminyl-tRNA synthetase. The reaction takes place in the presence of glutamine and ATP through an activated gamma-phospho-Glu-tRNA(Gln). In Natronomonas pharaonis (strain ATCC 35678 / DSM 2160 / CIP 103997 / JCM 8858 / NBRC 14720 / NCIMB 2260 / Gabara) (Halobacterium pharaonis), this protein is Glutamyl-tRNA(Gln) amidotransferase subunit A.